The chain runs to 426 residues: MAIAQLATEYVFSDFLLKEPTEPKFKGLRLELAVDKMVTCIAVGLPLLLISLAFAQEISIGTQISCFSPSSFSWRQAAFVDSYCWAAVQQKNSLQSESGNLPLWLHKFFPYILLLFAILLYLPPLFWRFAAAPHICSDLKFIMEELDKVYNRAIKAAKSARDLDMRDGACSVPGVTENLGQSLWEVSESHFKYPIVEQYLKTKKNSNNLIIKYISCRLLTLIIILLACIYLGYYFSLSSLSDEFVCSIKSGILRNDSTVPDQFQCKLIAVGIFQLLSVINLVVYVLLAPVVVYTLFVPFRQKTDVLKVYEILPTFDVLHFKSEGYNDLSLYNLFLEENISEVKSYKCLKVLENIKSSGQGIDPMLLLTNLGMIKMDVVDGKTPMSAEMREEQGNQTAELQGMNIDSETKANNGEKNARQRLLDSSC.

The Cytoplasmic segment spans residues 1-40 (MAIAQLATEYVFSDFLLKEPTEPKFKGLRLELAVDKMVTC). Residue C40 is modified to S-nitrosocysteine. A helical transmembrane segment spans residues 41–61 (IAVGLPLLLISLAFAQEISIG). Residues 62-106 (TQISCFSPSSFSWRQAAFVDSYCWAAVQQKNSLQSESGNLPLWLH) lie on the Extracellular side of the membrane. 2 disulfide bridges follow: C66/C265 and C84/C246. A helical transmembrane segment spans residues 107–127 (KFFPYILLLFAILLYLPPLFW). At 128-217 (RFAAAPHICS…NLIIKYISCR (90 aa)) the chain is on the cytoplasmic side. The residue at position 199 (Y199) is a Phosphotyrosine. The helical transmembrane segment at 218 to 238 (LLTLIIILLACIYLGYYFSLS) threads the bilayer. Residues 239–266 (SLSDEFVCSIKSGILRNDSTVPDQFQCK) are Extracellular-facing. Residue N255 is glycosylated (N-linked (GlcNAc...) asparagine). The chain crosses the membrane as a helical span at residues 267-287 (LIAVGIFQLLSVINLVVYVLL). At 288–426 (APVVVYTLFV…ARQRLLDSSC (139 aa)) the chain is on the cytoplasmic side. S-nitrosocysteine is present on C347. Residues 405–414 (DSETKANNGE) are compositionally biased toward polar residues. The interval 405-426 (DSETKANNGEKNARQRLLDSSC) is disordered. Over residues 415–426 (KNARQRLLDSSC) the composition is skewed to basic and acidic residues.

The protein belongs to the pannexin family. In terms of assembly, homoheptameric. Post-translationally, S-nitrosylation inhibits channel currents and ATP release. In terms of processing, N-glycosylation plays a role in cell surface targeting. Glycosylation at its extracellular surface makes unlikely that two oligomers could dock to form an intercellular channel such as in gap junctions. Exists in three glycosylation states: non-glycosylated (GLY0), high-mannose glycosylated (GLY1), and fully mature glycosylated (GLY2). Cleaved by CASP3 and CASP7 during apoptosis. Cleavage opens the channel for the release of metabolites and induces plasma membrane permeability during apoptosis. Post-translationally, phosphorylated at Tyr-199 by SRC. Phosphorylation activates ATP release. Constitutively phosphorylated in vascular smooth muscle cells. In terms of tissue distribution, widely expressed. Highest expression is observed in oocytes and brain. Detected at very low levels in sperm cells.

It localises to the cell membrane. It is found in the endoplasmic reticulum membrane. It catalyses the reaction chloride(in) = chloride(out). It carries out the reaction iodide(out) = iodide(in). The catalysed reaction is ATP(in) = ATP(out). The enzyme catalyses K(+)(in) = K(+)(out). It catalyses the reaction Ca(2+)(in) = Ca(2+)(out). It carries out the reaction Na(+)(in) = Na(+)(out). The catalysed reaction is nitrate(in) = nitrate(out). The enzyme catalyses L-aspartate(out) = L-aspartate(in). It catalyses the reaction L-glutamate(out) = L-glutamate(in). It carries out the reaction D-gluconate(in) = D-gluconate(out). The catalysed reaction is spermidine(in) = spermidine(out). In terms of biological role, ion channel involved in a variety of physiological functions such as blood pressure regulation, apoptotic cell clearance and oogenesis. Forms anion-selective channels with relatively low conductance and an order of permeabilities: nitrate&gt;iodide&gt;chlroride&gt;&gt;aspartate=glutamate=gluconate. Can release ATP upon activation through phosphorylation or cleavage at C-terminus. May play a role as a Ca(2+)-leak channel to regulate ER Ca(2+) homeostasis. Functionally, during apoptosis, the C terminal tail is cleaved by caspases, which opens the main pore acting as a large-pore ATP efflux channel with a broad distribution, which allows the regulated release of molecules and ions smaller than 1 kDa, such as nucleotides ATP and UTP, and selective plasma membrane permeability to attract phagocytes that engulf the dying cells. This chain is Pannexin-1, found in Homo sapiens (Human).